We begin with the raw amino-acid sequence, 138 residues long: Putative nickel-responsive regulator (138 aa).

Residues His-78, His-89, His-91, and Cys-97 each contribute to the Ni(2+) site.

The protein belongs to the transcriptional regulatory CopG/NikR family. Requires Ni(2+) as cofactor.

Its function is as follows. Transcriptional regulator. This Thermococcus kodakarensis (strain ATCC BAA-918 / JCM 12380 / KOD1) (Pyrococcus kodakaraensis (strain KOD1)) protein is Putative nickel-responsive regulator.